Reading from the N-terminus, the 494-residue chain is Probable serine/threonine-protein kinase BSK3 (494 aa).

Gly-2 carries N-myristoyl glycine lipidation. In terms of domain architecture, Protein kinase spans 61–316 (ENIVSEHGEK…SLVQALAPLQ (256 aa)). Residues 67–75 (HGEKAPNVV) and Lys-89 contribute to the ATP site. The active-site Proton acceptor is Asp-183. A phosphoserine mark is found at Ser-213 and Ser-215. A TPR repeat occupies 423 to 456 (PTIYARRCLSYLMNDKAEQALSDAMQALVISPTW).

In terms of assembly, interacts with BRI1 and BSL1. Post-translationally, phosphorylated at Ser-213 and Ser-215 by BRI1. Phosphorylation at Ser-215 is required for its function in the regulation of brassinosteroid signaling. Phosphorylation by BRI1 disrupts the interaction between its TPR and kinase domains, thereby increasing the binding between its kinase domain and BSL1.

It localises to the cell membrane. It carries out the reaction L-seryl-[protein] + ATP = O-phospho-L-seryl-[protein] + ADP + H(+). The catalysed reaction is L-threonyl-[protein] + ATP = O-phospho-L-threonyl-[protein] + ADP + H(+). In terms of biological role, probable serine/threonine kinase that acts as a positive regulator of brassinosteroid (BR) signaling downstream of BRI1. This is Probable serine/threonine-protein kinase BSK3 from Oryza sativa subsp. japonica (Rice).